We begin with the raw amino-acid sequence, 460 residues long: Ammonium transporter Rh type B-B (460 aa).

Over 1–10 (MTSYSTNMRI) the chain is Cytoplasmic. Residues 11-31 (KLPLFCLLLQFITIILFAVFV) traverse the membrane as a helical segment. Residues 32–62 (RYDHESDARGWHEELNNHSSSNADNDFYYRY) are Extracellular-facing. A glycan (N-linked (GlcNAc...) asparagine) is linked at Asn48. Residues 63 to 83 (PSFQDVHVMIFIGFGFLMTFL) traverse the membrane as a helical segment. The Cytoplasmic segment spans residues 84–87 (KRYG). Residues 88-108 (FSSVAFNFLIAAFGLQWSTLI) form a helical membrane-spanning segment. The Extracellular portion of the chain corresponds to 109–125 (QGFFHGFHDGKIHVGIE). The helical transmembrane segment at 126 to 146 (SMINADFCTGAVLISFGAVLG) threads the bilayer. The Cytoplasmic segment spans residues 147–150 (KTSP). A helical membrane pass occupies residues 151-171 (VQLIIMTLVEVTLFGINEYII). At 172-179 (LNIVGAKD) the chain is on the extracellular side. The helical transmembrane segment at 180–202 (AGGSMTIHTFGAYFGLIVSRVLY) threads the bilayer. Topologically, residues 203–220 (REDLEKSRQREGSVYHSD) are cytoplasmic. A helical membrane pass occupies residues 221–241 (LFAMIGTIYLWMFWPSFNSAV). Over 242–252 (TAHGDDQHRTV) the chain is Extracellular. Residues 253 to 273 (MNTYYSLAACTLATFGFSALL) form a helical membrane-spanning segment. Over 274–283 (NGEGKLDMVH) the chain is Cytoplasmic. A helical membrane pass occupies residues 284–304 (IQNAALAGGVAVGTSGEMMLT). Position 305 (Pro305) is a topological domain, extracellular. The helical transmembrane segment at 306–326 (FGAMIAGTLAGMISVLGYKYL) threads the bilayer. At 327–347 (TPVLDSKLKIQDTCGVHNLHG) the chain is on the cytoplasmic side. The helical transmembrane segment at 348-368 (MPGILGAIIGAIVALFATADI) threads the bilayer. Residues 369–394 (YGDGMGDVFPLISDGSRTAKQQSLYQ) lie on the Extracellular side of the membrane. A helical transmembrane segment spans residues 395–415 (FLALLVALGFAIIGGTVVGFI). The Cytoplasmic segment spans residues 416-460 (LKLPIFGTPSDAECFEDAIYWEVPGGEGHQQLTVVINNEDPDTQA).

This sequence belongs to the ammonium transporter (TC 2.A.49) family. Rh subfamily.

The protein localises to the basolateral cell membrane. It localises to the cytoplasmic vesicle membrane. Functionally, functions as a specific ammonium transporter. The chain is Ammonium transporter Rh type B-B (rhbg-b) from Xenopus laevis (African clawed frog).